The chain runs to 621 residues: UvrABC system protein C (621 aa).

The GIY-YIG domain maps to 13–92 (EKPGVYLMKN…IKKYRPRYNI (80 aa)). In terms of domain architecture, UVR spans 204–239 (NEVINDLKIKMEKASSELKFEEAASFRDKLLAVEKI).

Belongs to the UvrC family. Interacts with UvrB in an incision complex.

It is found in the cytoplasm. The UvrABC repair system catalyzes the recognition and processing of DNA lesions. UvrC both incises the 5' and 3' sides of the lesion. The N-terminal half is responsible for the 3' incision and the C-terminal half is responsible for the 5' incision. This is UvrABC system protein C from Clostridium novyi (strain NT).